A 1006-amino-acid polypeptide reads, in one-letter code: D-2-hydroxyglutarate dehydrogenase (1006 aa).

An FAD-binding PCMH-type domain is found at Tyr-47–Ile-279. (R)-2-hydroxyglutarate contacts are provided by Arg-397 and His-495. The 4Fe-4S ferredoxin-type domain occupies Ser-655–Arg-687. [4Fe-4S] cluster-binding residues include Cys-665, Cys-668, Cys-671, and Cys-675.

In the N-terminal section; belongs to the FAD-binding oxidoreductase/transferase type 4 family. Requires [4Fe-4S] cluster as cofactor. FAD serves as cofactor.

The catalysed reaction is (R)-2-hydroxyglutarate + A = 2-oxoglutarate + AH2. It participates in amino-acid degradation. Catalyzes the oxidation of D-2-hydroxyglutarate (D-2-HGA) to 2-oxoglutarate. Is involved in a D-lysine catabolic pathway. This is D-2-hydroxyglutarate dehydrogenase from Pseudomonas putida (strain ATCC 47054 / DSM 6125 / CFBP 8728 / NCIMB 11950 / KT2440).